The chain runs to 90 residues: Probable Fe(2+)-trafficking protein (90 aa).

It belongs to the Fe(2+)-trafficking protein family.

In terms of biological role, could be a mediator in iron transactions between iron acquisition and iron-requiring processes, such as synthesis and/or repair of Fe-S clusters in biosynthetic enzymes. The sequence is that of Probable Fe(2+)-trafficking protein from Actinobacillus succinogenes (strain ATCC 55618 / DSM 22257 / CCUG 43843 / 130Z).